We begin with the raw amino-acid sequence, 540 residues long: Glucose-6-phosphate isomerase (540 aa).

Glu-351 functions as the Proton donor in the catalytic mechanism. Catalysis depends on residues His-382 and Lys-506.

It belongs to the GPI family.

The protein localises to the cytoplasm. The enzyme catalyses alpha-D-glucose 6-phosphate = beta-D-fructose 6-phosphate. Its pathway is carbohydrate biosynthesis; gluconeogenesis. It functions in the pathway carbohydrate degradation; glycolysis; D-glyceraldehyde 3-phosphate and glycerone phosphate from D-glucose: step 2/4. Functionally, catalyzes the reversible isomerization of glucose-6-phosphate to fructose-6-phosphate. This Corynebacterium glutamicum (strain ATCC 13032 / DSM 20300 / JCM 1318 / BCRC 11384 / CCUG 27702 / LMG 3730 / NBRC 12168 / NCIMB 10025 / NRRL B-2784 / 534) protein is Glucose-6-phosphate isomerase.